Reading from the N-terminus, the 378-residue chain is Microtubule-associated protein 6 homolog (378 aa).

The interval 36–111 (VTDGAQPPPP…YQPSEAPLER (76 aa)) is disordered. The segment covering 52 to 62 (IETQPSLSDPY) has biased composition (polar residues). 2 mn regions span residues 79–99 (SVMR…CKPR) and 112–135 (ETQY…WIPK). 4 stretches are compositionally biased toward basic and acidic residues: residues 203–220 (KRES…RATR), 242–252 (NEFRPWTDVKP), 265–274 (PEEKVVHETS), and 306–315 (PSKESSKVEK). The tract at residues 203–378 (KRESFMPKLP…INNKLAEAKE (176 aa)) is disordered. Positions 237–260 (GTSYRNEFRPWTDVKPVKPIKAKS) are mn 3. The segment covering 322-337 (KPKKTSTSHKPVKKAK) has biased composition (basic residues). Residues 359–378 (KPEEKEKSKEINNKLAEAKE) show a composition bias toward basic and acidic residues.

The protein belongs to the STOP family.

It localises to the cytoplasm. The protein resides in the cytoskeleton. Involved in microtubule stabilization in many cell types, including neuronal cells. Specifically has microtubule cold stabilizing activity. Involved in dendrite morphogenesis and maintenance by regulating lysosomal trafficking. The protein is Microtubule-associated protein 6 homolog (map6) of Xenopus tropicalis (Western clawed frog).